Consider the following 111-residue polypeptide: Cytochrome c (111 aa).

The residue at position 1 (Ala-1) is an N-acetylalanine. 3 residues coordinate heme c: Cys-22, Cys-25, and His-26. N6,N6,N6-trimethyllysine is present on Lys-80. Met-88 is a heme c binding site. Residue Lys-94 is modified to N6,N6,N6-trimethyllysine.

Belongs to the cytochrome c family. Binds 1 heme c group covalently per subunit.

The protein localises to the mitochondrion intermembrane space. Functionally, electron carrier protein. The oxidized form of the cytochrome c heme group can accept an electron from the heme group of the cytochrome c1 subunit of cytochrome reductase. Cytochrome c then transfers this electron to the cytochrome oxidase complex, the final protein carrier in the mitochondrial electron-transport chain. This chain is Cytochrome c, found in Cucurbita maxima (Pumpkin).